A 563-amino-acid chain; its full sequence is Membrane protein insertase YidC (563 aa).

The helical transmembrane segment at 6–26 threads the bilayer; that stretch reads TVLWMIFSFSLLLLWNNWQIH. Residues 36-70 form a disordered region; that stretch reads PAPEAAATQQPKADANGTAASSTASIPSSPAAAPA. The segment covering 54 to 70 has biased composition (low complexity); it reads AASSTASIPSSPAAAPA. Transmembrane regions (helical) follow at residues 373-393, 443-463, 482-502, and 512-532; these read WGWT…PLAA, LPMV…LASV, PFFI…KLNP, and VMMI…AGLV.

It belongs to the OXA1/ALB3/YidC family. Type 1 subfamily. In terms of assembly, interacts with the Sec translocase complex via SecD. Specifically interacts with transmembrane segments of nascent integral membrane proteins during membrane integration.

Its subcellular location is the cell inner membrane. Its function is as follows. Required for the insertion and/or proper folding and/or complex formation of integral membrane proteins into the membrane. Involved in integration of membrane proteins that insert both dependently and independently of the Sec translocase complex, as well as at least some lipoproteins. Aids folding of multispanning membrane proteins. The chain is Membrane protein insertase YidC from Bordetella parapertussis (strain 12822 / ATCC BAA-587 / NCTC 13253).